The chain runs to 311 residues: DNA-directed RNA polymerase subunit alpha (311 aa).

Residues 1–227 are alpha N-terminal domain (alpha-NTD); sequence MNNISIKCLK…DLFTLLINNK (227 aa). The alpha C-terminal domain (alpha-CTD) stretch occupies residues 242–311; that stretch reads ISIEPYTNIA…LKNKLGIILK (70 aa).

The protein belongs to the RNA polymerase alpha chain family. As to quaternary structure, in plastids the minimal PEP RNA polymerase catalytic core is composed of four subunits: alpha, beta, beta', and beta''. When a (nuclear-encoded) sigma factor is associated with the core the holoenzyme is formed, which can initiate transcription.

The protein resides in the plastid. The protein localises to the chloroplast. It carries out the reaction RNA(n) + a ribonucleoside 5'-triphosphate = RNA(n+1) + diphosphate. DNA-dependent RNA polymerase catalyzes the transcription of DNA into RNA using the four ribonucleoside triphosphates as substrates. This Phaeodactylum tricornutum (strain CCAP 1055/1) protein is DNA-directed RNA polymerase subunit alpha.